A 616-amino-acid polypeptide reads, in one-letter code: Chaperone protein HscA homolog (616 aa).

It belongs to the heat shock protein 70 family.

Functionally, chaperone involved in the maturation of iron-sulfur cluster-containing proteins. Has a low intrinsic ATPase activity which is markedly stimulated by HscB. The sequence is that of Chaperone protein HscA homolog from Vibrio atlanticus (strain LGP32) (Vibrio splendidus (strain Mel32)).